The sequence spans 3674 residues: Dystrophin (3674 aa).

The tract at residues 1–236 (MSEVSSDERE…YVTSLFQVLP (236 aa)) is actin-binding. Calponin-homology (CH) domains lie at 11–115 (DVQK…LHWQ) and 130–236 (TNSE…QVLP). Positions 59–68 (PKEKGSTRVH) are ANK2- and ANK-3 binding. Residues 306–318 (SDPTRSPFPSQRL) are compositionally biased toward polar residues. Residues 306 to 325 (SDPTRSPFPSQRLESPEDKS) are disordered. Spectrin repeat units lie at residues 335–443 (VNLD…NLHK), 444–552 (VLMD…LLQD), 555–663 (LKWQ…QISQ), 715–824 (EIRK…WLEY), 826–930 (NRII…ELQI), 939–1041 (RYQE…KLEE), 1044–1150 (AKLR…ALKG), 1153–1259 (DKTI…TLEE), 1262–1363 (ACWH…LLEQ), 1364–1459 (SIQS…LFQK), 1464–1564 (EQRL…QLEK), 1567–1672 (KLSR…LLLE), 1675–1774 (KHME…KASI), 1775–1870 (PLKE…KALE), 1873–1975 (HQWY…TVHE), 1988–2097 (EISY…KFDR), 2100–2204 (EKWR…RLEE), 2207–2314 (NILS…EIEA), 2315–2412 (HIKD…LRAK), 2464–2566 (FNRA…QLNE), 2569–2675 (KDST…VLEE), 2678–2791 (RLLQ…HLEA), 2797–2919 (KRLH…RKID), and 2924–3029 (RLQE…QLHE). Residues 1411-1909 (SDLTSHEISL…PEPQDEKKIK (499 aa)) are interaction with SYNM. One can recognise a WW domain in the interval 3044 to 3077 (TSVQGPWERAISPNKVPYYINHETQTTCWDHPKM). The interaction with SYNM stretch occupies residues 3047-3397 (QGPWERAISP…TVLEGDNMET (351 aa)). The ZZ-type; degenerate zinc-finger motif lies at 3297–3353 (KHQAKCNICKECPIIGFRYRSLKHFNYDICQSCFFSGRVAKGHKMHYPMVEYCTPTT). Zn(2+) contacts are provided by C3302, C3305, C3326, and C3329. The interval 3455–3507 (DDEHLLIQHYCQSLNQDSPLSQPRSPAQILISLESEERGELERILADLEEENR) is binds to SNTB1. A phosphoserine mark is found at S3472, S3479, and S3489. 2 disordered regions span residues 3517 to 3543 (KQQH…QSPR) and 3590 to 3674 (QAEA…EDTM). 2 stretches are compositionally biased toward polar residues: residues 3596 to 3615 (NGTT…SSQP) and 3651 to 3662 (QLNNSFPSSRGR). Residues S3601, S3602, S3606, S3612, S3613, and S3655 each carry the phosphoserine modification.

Interacts with SYNM. Interacts with the syntrophins SNTG1 and SNTG2. Interacts with KRT19. Component of the dystrophin-associated glycoprotein complex which is composed of three subcomplexes: a cytoplasmic complex comprised of DMD (or UTRN), DTNA and a number of syntrophins, such as SNTB1, SNTB2, SNTG1 and SNTG2, the transmembrane dystroglycan complex, and the sarcoglycan-sarcospan complex. Interacts with DAG1 (betaDAG1) with DMD; the interaction is inhibited by phosphorylation on the PPXY motif of DAG1. Interacts with SYNM; SNTA1 and SNTB1. Interacts with CMYA5. Directly interacts with ANK2 and ANK3; these interactions do not interfere with betaDAG1-binding and are necessary for proper localization in muscle cells. Identified in a dystroglycan complex that contains at least PRX, DRP2, UTRN, DMD and DAG1. Interacts with DTNB. Interacts with PGM5; the interaction is direct. Interacts with NOS1; localizes NOS1 to sarcolemma in muscle cells. In the retina, expressed in the outer plexiform layer (OPL) and around the blood vessels. Also observed at the vitreal border of the retina corresponding to the inner limiting membrane (ILM). Presynaptically localized in cone pedicles and postsynaptically in bipolar cells (at protein level).

It localises to the cell membrane. The protein resides in the sarcolemma. It is found in the cytoplasm. The protein localises to the cytoskeleton. Its subcellular location is the postsynaptic cell membrane. Functionally, anchors the extracellular matrix to the cytoskeleton via F-actin. Ligand for dystroglycan. Component of the dystrophin-associated glycoprotein complex which accumulates at the neuromuscular junction (NMJ) and at a variety of synapses in the peripheral and central nervous systems and has a structural function in stabilizing the sarcolemma. Also implicated in signaling events and synaptic transmission. The polypeptide is Dystrophin (Sus scrofa (Pig)).